Reading from the N-terminus, the 59-residue chain is MANPKRKQSKRRSANRRAANAFIAPEFAKDPTDGSAFRPHRVNPKNGMYRGRQVLNVEV.

Basic residues predominate over residues 1–15 (MANPKRKQSKRRSAN). Residues 1–48 (MANPKRKQSKRRSANRRAANAFIAPEFAKDPTDGSAFRPHRVNPKNGM) are disordered.

This sequence belongs to the bacterial ribosomal protein bL32 family.

This chain is Large ribosomal subunit protein bL32, found in Opitutus terrae (strain DSM 11246 / JCM 15787 / PB90-1).